The following is a 444-amino-acid chain: tRNA-2-methylthio-N(6)-dimethylallyladenosine synthase (444 aa).

Positions 2–119 (KKLYIRTFGC…LPSMLNEVLT (118 aa)) constitute an MTTase N-terminal domain. [4Fe-4S] cluster-binding residues include Cys-11, Cys-48, Cys-82, Cys-161, Cys-165, and Cys-168. The Radical SAM core domain occupies 147–379 (KTSSVTAFVS…QKTIDKNTER (233 aa)). One can recognise a TRAM domain in the interval 382 to 444 (KSMVGSVQKI…GNSLVGNLIA (63 aa)).

The protein belongs to the methylthiotransferase family. MiaB subfamily. As to quaternary structure, monomer. It depends on [4Fe-4S] cluster as a cofactor.

It is found in the cytoplasm. The enzyme catalyses N(6)-dimethylallyladenosine(37) in tRNA + (sulfur carrier)-SH + AH2 + 2 S-adenosyl-L-methionine = 2-methylsulfanyl-N(6)-dimethylallyladenosine(37) in tRNA + (sulfur carrier)-H + 5'-deoxyadenosine + L-methionine + A + S-adenosyl-L-homocysteine + 2 H(+). Its function is as follows. Catalyzes the methylthiolation of N6-(dimethylallyl)adenosine (i(6)A), leading to the formation of 2-methylthio-N6-(dimethylallyl)adenosine (ms(2)i(6)A) at position 37 in tRNAs that read codons beginning with uridine. This is tRNA-2-methylthio-N(6)-dimethylallyladenosine synthase from Ruthia magnifica subsp. Calyptogena magnifica.